A 156-amino-acid polypeptide reads, in one-letter code: ATP synthase subunit b (156 aa).

Residues Leu7 to Leu29 form a helical membrane-spanning segment.

Belongs to the ATPase B chain family. F-type ATPases have 2 components, F(1) - the catalytic core - and F(0) - the membrane proton channel. F(1) has five subunits: alpha(3), beta(3), gamma(1), delta(1), epsilon(1). F(0) has three main subunits: a(1), b(2) and c(10-14). The alpha and beta chains form an alternating ring which encloses part of the gamma chain. F(1) is attached to F(0) by a central stalk formed by the gamma and epsilon chains, while a peripheral stalk is formed by the delta and b chains.

It is found in the cell inner membrane. F(1)F(0) ATP synthase produces ATP from ADP in the presence of a proton or sodium gradient. F-type ATPases consist of two structural domains, F(1) containing the extramembraneous catalytic core and F(0) containing the membrane proton channel, linked together by a central stalk and a peripheral stalk. During catalysis, ATP synthesis in the catalytic domain of F(1) is coupled via a rotary mechanism of the central stalk subunits to proton translocation. Functionally, component of the F(0) channel, it forms part of the peripheral stalk, linking F(1) to F(0). This Photobacterium profundum (strain SS9) protein is ATP synthase subunit b.